The chain runs to 442 residues: Interferon-related developmental regulator 2 (442 aa).

Residues 1–15 (MPRARKGNTLRKGGQ) show a composition bias toward basic residues. The disordered stretch occupies residues 1-71 (MPRARKGNTL…DVVDEQGQQE (71 aa)). Positions 43–56 (TASECPSLLSTTAE) are enriched in polar residues.

This sequence belongs to the IFRD family. As to quaternary structure, associates with ribosomes; promoting ribosome inactivation. In terms of tissue distribution, expressed in many tissues including heart, brain, placenta, lung, liver, skeletal muscle, kidney and pancreas.

Ribosome-binding protein that acts as an inhibitor of mRNA translation by promoting ribosome inactivation. Associates with the P- and E-sites of the ribosome and inserts a C-terminal helix into the mRNA exit channel to preclude translation. The chain is Interferon-related developmental regulator 2 from Homo sapiens (Human).